The following is a 133-amino-acid chain: Fatty acid-binding protein, heart (133 aa).

Val-2 is modified (N-acetylvaline). Phosphothreonine is present on Thr-8. Tyr-20 bears the Phosphotyrosine; by Tyr-kinases mark. The residue at position 23 (Ser-23) is a Phosphoserine. At Thr-30 the chain carries Phosphothreonine. Position 83 is a phosphoserine (Ser-83). Residue 127–129 (RTY) coordinates (9Z)-octadecenoate. 127-129 (RTY) is a binding site for hexadecanoate. Octadecanoate is bound at residue 127 to 129 (RTY).

This sequence belongs to the calycin superfamily. Fatty-acid binding protein (FABP) family.

The protein resides in the cytoplasm. Functionally, FABPs are thought to play a role in the intracellular transport of long-chain fatty acids and their acyl-CoA esters. The sequence is that of Fatty acid-binding protein, heart (FABP3) from Bos mutus grunniens (Wild yak).